The following is a 250-amino-acid chain: Mediator of RNA polymerase II transcription subunit 8 (250 aa).

The interval 217-250 (SPMSAVSPGAGPLGKMPSGIKTNIKSANQVHPYR) is disordered. A compositionally biased stretch (polar residues) spans 236-250 (IKTNIKSANQVHPYR).

It belongs to the Mediator complex subunit 8 family. In terms of assembly, component of the Mediator complex.

Its subcellular location is the nucleus. Component of the Mediator complex, a coactivator involved in the regulated transcription of nearly all RNA polymerase II-dependent genes. Mediator functions as a bridge to convey information from gene-specific regulatory proteins to the basal RNA polymerase II transcription machinery. Mediator is recruited to promoters by direct interactions with regulatory proteins and serves as a scaffold for the assembly of a functional preinitiation complex with RNA polymerase II and the general transcription factors. The protein is Mediator of RNA polymerase II transcription subunit 8 (MED8) of Aedes aegypti (Yellowfever mosquito).